A 151-amino-acid polypeptide reads, in one-letter code: Ubiquitin-like protein 4A-B (151 aa).

One can recognise a Ubiquitin-like domain in the interval 1–76 (MILTIKPLKG…LNLVVRPAGE (76 aa)).

Component of the BAT3 complex.

It localises to the cytoplasm. It is found in the cytosol. Functionally, component of the BAT3 complex, a multiprotein complex involved in the post-translational delivery of tail-anchored (TA) membrane proteins to the endoplasmic reticulum membrane. TA membrane proteins, also named type II transmembrane proteins, contain a single C-terminal transmembrane region. The polypeptide is Ubiquitin-like protein 4A-B (ubl4ab) (Oncorhynchus mykiss (Rainbow trout)).